We begin with the raw amino-acid sequence, 451 residues long: Phosphoglucosamine mutase (451 aa).

Ser107 (phosphoserine intermediate) is an active-site residue. Mg(2+) is bound by residues Ser107, Asp246, Asp248, and Asp250. Position 107 is a phosphoserine (Ser107).

It belongs to the phosphohexose mutase family. Mg(2+) serves as cofactor. Post-translationally, activated by phosphorylation.

The catalysed reaction is alpha-D-glucosamine 1-phosphate = D-glucosamine 6-phosphate. Catalyzes the conversion of glucosamine-6-phosphate to glucosamine-1-phosphate. The protein is Phosphoglucosamine mutase of Azoarcus sp. (strain BH72).